We begin with the raw amino-acid sequence, 225 residues long: Uracil-DNA glycosylase (225 aa).

The active-site Proton acceptor is the Asp-64.

The protein belongs to the uracil-DNA glycosylase (UDG) superfamily. UNG family.

It is found in the cytoplasm. It carries out the reaction Hydrolyzes single-stranded DNA or mismatched double-stranded DNA and polynucleotides, releasing free uracil.. In terms of biological role, excises uracil residues from the DNA which can arise as a result of misincorporation of dUMP residues by DNA polymerase or due to deamination of cytosine. This chain is Uracil-DNA glycosylase, found in Lachnoclostridium phytofermentans (strain ATCC 700394 / DSM 18823 / ISDg) (Clostridium phytofermentans).